A 39-amino-acid chain; its full sequence is Cytochrome b559 subunit beta (39 aa).

A helical transmembrane segment spans residues 14–30; it reads WLAVHGLAVPTVSFLGS. Histidine 18 provides a ligand contact to heme.

The protein belongs to the PsbE/PsbF family. As to quaternary structure, heterodimer of an alpha subunit and a beta subunit. PSII is composed of 1 copy each of membrane proteins PsbA, PsbB, PsbC, PsbD, PsbE, PsbF, PsbH, PsbI, PsbJ, PsbK, PsbL, PsbM, PsbT, PsbX, PsbY, PsbZ, Psb30/Ycf12, at least 3 peripheral proteins of the oxygen-evolving complex and a large number of cofactors. It forms dimeric complexes. Heme b serves as cofactor.

The protein resides in the plastid. Its subcellular location is the chloroplast thylakoid membrane. This b-type cytochrome is tightly associated with the reaction center of photosystem II (PSII). PSII is a light-driven water:plastoquinone oxidoreductase that uses light energy to abstract electrons from H(2)O, generating O(2) and a proton gradient subsequently used for ATP formation. It consists of a core antenna complex that captures photons, and an electron transfer chain that converts photonic excitation into a charge separation. In Muilla maritima (Sea muilla), this protein is Cytochrome b559 subunit beta.